A 448-amino-acid polypeptide reads, in one-letter code: Antizyme inhibitor 1 (448 aa).

The protein belongs to the Orn/Lys/Arg decarboxylase class-II family. ODC antizyme inhibitor subfamily. Monomer. Interacts with OAZ1 and OAZ3; this interaction disrupts the interaction between the antizyme and ODC1. Ubiquitinated, leading to its proteasomal degradation; a process that is reduced in presence of antizyme OAZ1. Expressed during testis development.

It localises to the nucleus. In terms of biological role, antizyme inhibitor (AZI) protein that positively regulates ornithine decarboxylase (ODC) activity and polyamine uptake. AZI is an enzymatically inactive ODC homolog that counteracts the negative effect of ODC antizymes (AZs) OAZ1, OAZ2 and OAZ3 on ODC activity by competing with ODC for antizyme-binding. Inhibits antizyme-dependent ODC degradation and releases ODC monomers from their inactive complex with antizymes, leading to formation of the catalytically active ODC homodimer and restoring polyamine production. The chain is Antizyme inhibitor 1 (Azin1) from Mus musculus (Mouse).